The following is a 210-amino-acid chain: Probable glutathione S-transferase gst-36 (210 aa).

A GST N-terminal domain is found at Pro-2–Gly-79. Glutathione contacts are provided by residues Tyr-8, Trp-39, Lys-43, Gly-49 to Val-51, and Gln-63 to Thr-64. Residues Asn-81–Ala-210 form the GST C-terminal domain.

Belongs to the GST superfamily. Sigma family.

The catalysed reaction is RX + glutathione = an S-substituted glutathione + a halide anion + H(+). Functionally, conjugation of reduced glutathione to a wide number of exogenous and endogenous hydrophobic electrophiles. This Caenorhabditis elegans protein is Probable glutathione S-transferase gst-36 (gst-36).